The sequence spans 397 residues: UDP-GlcNAc:betaGal beta-1,3-N-acetylglucosaminyltransferase 7 (397 aa).

The Cytoplasmic segment spans residues Met1–Lys6. A helical transmembrane segment spans residues Thr7–Gln26. Over Arg27–Leu397 the chain is Lumenal. N-linked (GlcNAc...) asparagine glycans are attached at residues Asn84, Asn90, Asn210, and Asn387.

The protein belongs to the glycosyltransferase 31 family. As to expression, strongly expressed in placenta and colon. Moderately expressed in lung, stomach, small intestine and kidney. Very weakly expressed in cerebrum, cerebellum, heart and testis.

The protein localises to the golgi apparatus membrane. Its pathway is protein modification; protein glycosylation. N-acetyl glucosamine (GlcNAc) transferase that catalyzes the transfer of GlcNAc via a beta1-&gt;3 linkage from UDP-GlcNAc to the non-reducing terminal galactose (Gal) in the linearly growing chain of N- and O-linked keratan sulfate proteoglycans. Cooperates with B4GALT4 galactosyltransferase and CHST6 and CHST1 sulfotransferases to construct and elongate mono- and disulfated disaccharide units [-&gt;3Galbeta1-&gt;4(6-sulfoGlcNAcbeta)1-&gt;] and [-&gt;3(6-sulfoGalbeta)1-&gt;4(6-sulfoGlcNAcbeta)1-&gt;] within keratan sulfate polymer. Involved in biosynthesis of N-linked keratan sulfate proteoglycans in cornea, with an impact on proteoglycan fibril organization and corneal transparency. May play a role in the maintenance of tissue architecture by suppressing cellular motility and invasion. The sequence is that of UDP-GlcNAc:betaGal beta-1,3-N-acetylglucosaminyltransferase 7 (B3gnt7) from Mus musculus (Mouse).